We begin with the raw amino-acid sequence, 73 residues long: Large ribosomal subunit protein uL24 (73 aa).

A compositionally biased stretch (basic and acidic residues) spans 53 to 65 (NPKGGFIKKEKPM). Residues 53–73 (NPKGGFIKKEKPMHISNVKKA) are disordered.

Belongs to the universal ribosomal protein uL24 family. In terms of assembly, part of the 50S ribosomal subunit.

Functionally, one of two assembly initiator proteins, it binds directly to the 5'-end of the 23S rRNA, where it nucleates assembly of the 50S subunit. One of the proteins that surrounds the polypeptide exit tunnel on the outside of the subunit. This Helicobacter pylori (strain J99 / ATCC 700824) (Campylobacter pylori J99) protein is Large ribosomal subunit protein uL24.